A 250-amino-acid polypeptide reads, in one-letter code: NAD-dependent protein deacylase (250 aa).

The Deacetylase sirtuin-type domain occupies 1-248 (MLGEVSKILA…PKLVEEIRRI (248 aa)). Residue 20 to 39 (GAGISAESGIPTFRGKDGLW) participates in NAD(+) binding. Substrate-binding residues include tyrosine 64 and arginine 67. An NAD(+)-binding site is contributed by 98–101 (QNVD). Residue histidine 116 is the Proton acceptor of the active site. The Zn(2+) site is built by cysteine 124, cysteine 127, cysteine 150, and cysteine 153. Residues 190–192 (GTS), 216–218 (NIE), and alanine 234 each bind NAD(+).

It belongs to the sirtuin family. Class III subfamily. It depends on Zn(2+) as a cofactor.

The protein localises to the cytoplasm. The enzyme catalyses N(6)-acetyl-L-lysyl-[protein] + NAD(+) + H2O = 2''-O-acetyl-ADP-D-ribose + nicotinamide + L-lysyl-[protein]. It carries out the reaction N(6)-succinyl-L-lysyl-[protein] + NAD(+) + H2O = 2''-O-succinyl-ADP-D-ribose + nicotinamide + L-lysyl-[protein]. In terms of biological role, NAD-dependent lysine deacetylase and desuccinylase that specifically removes acetyl and succinyl groups on target proteins. Modulates the activities of several proteins which are inactive in their acylated form. Deacetylates the N-terminal lysine residue of Alba, the major archaeal chromatin protein and that, in turn, increases Alba's DNA binding affinity, thereby repressing transcription. The chain is NAD-dependent protein deacylase from Pyrococcus furiosus (strain ATCC 43587 / DSM 3638 / JCM 8422 / Vc1).